Reading from the N-terminus, the 342-residue chain is Ribosomal RNA small subunit methyltransferase C (342 aa).

This sequence belongs to the methyltransferase superfamily. RsmC family. Monomer.

It localises to the cytoplasm. It catalyses the reaction guanosine(1207) in 16S rRNA + S-adenosyl-L-methionine = N(2)-methylguanosine(1207) in 16S rRNA + S-adenosyl-L-homocysteine + H(+). Functionally, specifically methylates the guanine in position 1207 of 16S rRNA in the 30S particle. This Aeromonas hydrophila subsp. hydrophila (strain ATCC 7966 / DSM 30187 / BCRC 13018 / CCUG 14551 / JCM 1027 / KCTC 2358 / NCIMB 9240 / NCTC 8049) protein is Ribosomal RNA small subunit methyltransferase C.